Reading from the N-terminus, the 484-residue chain is tRNA sulfurtransferase (484 aa).

The 105-residue stretch at 63 to 167 (EAFGERLACI…NEQLYLVDKR (105 aa)) folds into the THUMP domain. ATP-binding positions include 185 to 186 (LI), K267, G289, and Q298. C346 and C458 form a disulfide bridge. Residues 406 to 484 (ISADEVIIDV…GYSNVKVYRP (79 aa)) form the Rhodanese domain. The active-site Cysteine persulfide intermediate is C458.

Belongs to the ThiI family.

The protein localises to the cytoplasm. The catalysed reaction is [ThiI sulfur-carrier protein]-S-sulfanyl-L-cysteine + a uridine in tRNA + 2 reduced [2Fe-2S]-[ferredoxin] + ATP + H(+) = [ThiI sulfur-carrier protein]-L-cysteine + a 4-thiouridine in tRNA + 2 oxidized [2Fe-2S]-[ferredoxin] + AMP + diphosphate. It catalyses the reaction [ThiS sulfur-carrier protein]-C-terminal Gly-Gly-AMP + S-sulfanyl-L-cysteinyl-[cysteine desulfurase] + AH2 = [ThiS sulfur-carrier protein]-C-terminal-Gly-aminoethanethioate + L-cysteinyl-[cysteine desulfurase] + A + AMP + 2 H(+). It functions in the pathway cofactor biosynthesis; thiamine diphosphate biosynthesis. Functionally, catalyzes the ATP-dependent transfer of a sulfur to tRNA to produce 4-thiouridine in position 8 of tRNAs, which functions as a near-UV photosensor. Also catalyzes the transfer of sulfur to the sulfur carrier protein ThiS, forming ThiS-thiocarboxylate. This is a step in the synthesis of thiazole, in the thiamine biosynthesis pathway. The sulfur is donated as persulfide by IscS. The sequence is that of tRNA sulfurtransferase from Shewanella piezotolerans (strain WP3 / JCM 13877).